Consider the following 335-residue polypeptide: Urokinase plasminogen activator surface receptor (335 aa).

The first 22 residues, 1–22, serve as a signal peptide directing secretion; that stretch reads MGHPLLLPLLLLLHTCVPASWG. 3 consecutive UPAR/Ly6 domains span residues 23–114, 115–213, and 214–305; these read LRCM…RSRY, LECI…PQNG, and HQCY…YRKG. Disulfide bonds link cysteine 25-cysteine 46, cysteine 28-cysteine 34, and cysteine 39-cysteine 67. Asparagine 74 carries an N-linked (GlcNAc...) asparagine glycan. Disulfide bonds link cysteine 93-cysteine 98, cysteine 117-cysteine 144, cysteine 120-cysteine 127, cysteine 137-cysteine 169, cysteine 175-cysteine 192, cysteine 193-cysteine 198, cysteine 216-cysteine 244, cysteine 219-cysteine 227, cysteine 237-cysteine 263, cysteine 269-cysteine 287, and cysteine 288-cysteine 293. N-linked (GlcNAc...) asparagine glycosylation is found at asparagine 184, asparagine 194, asparagine 222, and asparagine 255. Glycine 305 carries the GPI-anchor amidated glycine lipid modification. A propeptide spans 306–335 (removed in mature form); that stretch reads AAPQPGPAHLSLTITLLMTARLWGGTLLWT.

Monomer. Interacts (via the UPAR/Ly6 domains) with SRPX2. Interacts with MRC2. Interacts with FAP (seprase); the interaction occurs at the cell surface of invadopodia membrane. Interacts with SORL1 (via N-terminal ectodomain); this interaction decreases PLAUR internalization. The ternary complex composed of PLAUR-PLAU-SERPINE1 also interacts with SORL1.

The protein resides in the cell membrane. It is found in the cell projection. It localises to the invadopodium membrane. Acts as a receptor for urokinase plasminogen activator. Plays a role in localizing and promoting plasmin formation. Mediates the proteolysis-independent signal transduction activation effects of U-PA. It is subject to negative-feedback regulation by U-PA which cleaves it into an inactive form. The sequence is that of Urokinase plasminogen activator surface receptor (PLAUR) from Chlorocebus aethiops (Green monkey).